The chain runs to 122 residues: MKYSSIFSMLSFFILFACNETAVYGSDENIIFMRYVEKLHLDKYSVKNTVKTETMAIQLAEIYVRYRYGERIAEEEKPYLITELPDSWVVEGAKLPYEVAGGVFIIEINKKNGCVLNFLHSK.

Positions 1-17 (MKYSSIFSMLSFFILFA) are cleaved as a signal peptide.

This is an uncharacterized protein from Escherichia coli (strain K12).